The sequence spans 380 residues: Homeobox protein ceh-6 (380 aa).

Residues 1–25 (MLIPSSSSIPSSLSASASDSEPSSL) are compositionally biased toward low complexity. 3 disordered regions span residues 1–31 (MLIPSSSSIPSSLSASASDSEPSSLNGSGIS), 167–190 (SGSVSGAGGPHQPLSDISDDSEQT), and 265–286 (GSPNSTFEKMTGQAGRKRKKRT). The POU-specific domain maps to 187 to 261 (SEQTCPDDLE…LLFKWLEEAD (75 aa)). The segment at residues 281–340 (KRKKRTSIEVNVKSRLEFHFQSNQKPNAQEITQVAMELQLEKEVVRVWFCNRRQKEKRIA) is a DNA-binding region (homeobox).

It belongs to the POU transcription factor family. Class-3 subfamily. As to quaternary structure, interacts with egl-27, sox-2 and sem-4. Interacts with wdr-5.1. In terms of tissue distribution, expressed in a series of neurons in the ring ganglia, excretory cell, dividing neuroblasts in the ventral cord and rectal cells.

The protein localises to the nucleus. Functionally, vital for embryonic development and essential for the proper function of the excretory cell. Required for the transdifferentiation of the Y rectal epithelial cell to the PDA motor neuron during larval development. The chain is Homeobox protein ceh-6 from Caenorhabditis elegans.